The following is a 98-amino-acid chain: La1-like protein 13 (98 aa).

An N-terminal signal peptide occupies residues 1 to 24 (MERILKPVFLAILIVLSFSSQCMG). Position 97 is a lysine amide (Lys-97).

The protein belongs to the scorpion La1-like peptide family. Post-translationally, contains 4 disulfide bonds. As to expression, expressed by the venom gland.

The protein localises to the secreted. The chain is La1-like protein 13 from Urodacus yaschenkoi (Inland robust scorpion).